We begin with the raw amino-acid sequence, 382 residues long: UDP-N-acetylglucosamine--N-acetylmuramyl-(pentapeptide) pyrophosphoryl-undecaprenol N-acetylglucosamine transferase (382 aa).

UDP-N-acetyl-alpha-D-glucosamine-binding positions include 11–13 (TGG), N124, R164, S192, and Q314.

The protein belongs to the glycosyltransferase 28 family. MurG subfamily.

Its subcellular location is the cell membrane. It catalyses the reaction di-trans,octa-cis-undecaprenyl diphospho-N-acetyl-alpha-D-muramoyl-L-alanyl-D-glutamyl-meso-2,6-diaminopimeloyl-D-alanyl-D-alanine + UDP-N-acetyl-alpha-D-glucosamine = di-trans,octa-cis-undecaprenyl diphospho-[N-acetyl-alpha-D-glucosaminyl-(1-&gt;4)]-N-acetyl-alpha-D-muramoyl-L-alanyl-D-glutamyl-meso-2,6-diaminopimeloyl-D-alanyl-D-alanine + UDP + H(+). It participates in cell wall biogenesis; peptidoglycan biosynthesis. In terms of biological role, cell wall formation. Catalyzes the transfer of a GlcNAc subunit on undecaprenyl-pyrophosphoryl-MurNAc-pentapeptide (lipid intermediate I) to form undecaprenyl-pyrophosphoryl-MurNAc-(pentapeptide)GlcNAc (lipid intermediate II). The protein is UDP-N-acetylglucosamine--N-acetylmuramyl-(pentapeptide) pyrophosphoryl-undecaprenol N-acetylglucosamine transferase of Deinococcus deserti (strain DSM 17065 / CIP 109153 / LMG 22923 / VCD115).